Reading from the N-terminus, the 100-residue chain is Small ribosomal subunit protein uS14c (100 aa).

The protein belongs to the universal ribosomal protein uS14 family. As to quaternary structure, part of the 30S ribosomal subunit.

It localises to the plastid. The protein localises to the chloroplast. Its function is as follows. Binds 16S rRNA, required for the assembly of 30S particles. This chain is Small ribosomal subunit protein uS14c, found in Bigelowiella natans (Pedinomonas minutissima).